The sequence spans 194 residues: Adenylate kinase (194 aa).

10–15 (GAGKGT) provides a ligand contact to ATP. The segment at 30-59 (STGDMLRAAVAQQSEIGKRAKAVMDAGQLV) is NMP. AMP contacts are provided by residues threonine 31, arginine 36, 57–59 (QLV), 85–88 (GYPR), and glutamine 92. The tract at residues 126-142 (SRVAETIAKGGQVRSDD) is LID. ATP is bound at residue arginine 127. 2 residues coordinate AMP: arginine 139 and arginine 150. Alanine 178 is a binding site for ATP.

This sequence belongs to the adenylate kinase family. As to quaternary structure, monomer.

It is found in the cytoplasm. It carries out the reaction AMP + ATP = 2 ADP. It participates in purine metabolism; AMP biosynthesis via salvage pathway; AMP from ADP: step 1/1. Its function is as follows. Catalyzes the reversible transfer of the terminal phosphate group between ATP and AMP. Plays an important role in cellular energy homeostasis and in adenine nucleotide metabolism. The protein is Adenylate kinase of Brucella anthropi (strain ATCC 49188 / DSM 6882 / CCUG 24695 / JCM 21032 / LMG 3331 / NBRC 15819 / NCTC 12168 / Alc 37) (Ochrobactrum anthropi).